Consider the following 160-residue polypeptide: Protein-export protein SecB (160 aa).

This sequence belongs to the SecB family. As to quaternary structure, homotetramer, a dimer of dimers. One homotetramer interacts with 1 SecA dimer.

It localises to the cytoplasm. Functionally, one of the proteins required for the normal export of preproteins out of the cell cytoplasm. It is a molecular chaperone that binds to a subset of precursor proteins, maintaining them in a translocation-competent state. It also specifically binds to its receptor SecA. The sequence is that of Protein-export protein SecB from Aliivibrio salmonicida (strain LFI1238) (Vibrio salmonicida (strain LFI1238)).